A 156-amino-acid polypeptide reads, in one-letter code: MKHNDKQEKLAKAFKALLKEERFGSQAEIVTALQEMGFENINQSKVSRMLSRFGAVRTRNAKMEMVYCLPVELGVPTTSSPLKNLVLDVDHNGALVVIHTSPGAAQLIARLLDSLGKAEGILGTIAGDDTIFITPTSDTDIEELYLSALELFEQTP.

It belongs to the ArgR family.

The protein localises to the cytoplasm. The protein operates within amino-acid biosynthesis; L-arginine biosynthesis [regulation]. In terms of biological role, regulates arginine biosynthesis genes. This is Arginine repressor from Aeromonas hydrophila subsp. hydrophila (strain ATCC 7966 / DSM 30187 / BCRC 13018 / CCUG 14551 / JCM 1027 / KCTC 2358 / NCIMB 9240 / NCTC 8049).